Here is a 572-residue protein sequence, read N- to C-terminus: Enolase 4 (572 aa).

The tract at residues Ile181–Lys204 is disordered. The segment covering Gly194–Lys204 has biased composition (basic residues). Glu288 serves as a coordination point for substrate. Lys468 acts as the Proton acceptor in catalysis. Position 519 (Lys519) interacts with substrate.

Belongs to the enolase family.

The catalysed reaction is (2R)-2-phosphoglycerate = phosphoenolpyruvate + H2O. It participates in carbohydrate degradation; glycolysis; pyruvate from D-glyceraldehyde 3-phosphate: step 4/5. This chain is Enolase 4 (eno4), found in Xenopus laevis (African clawed frog).